The sequence spans 128 residues: Otoraplin (128 aa).

Positions 1 to 17 (MARILLLFLPGLVAVCA) are cleaved as a signal peptide. Disulfide bonds link C32/C37 and C55/C127. The 72-residue stretch at 39–110 (YTISLASAQE…PRNLVKEQRV (72 aa)) folds into the SH3 domain.

Belongs to the MIA/OTOR family. In terms of tissue distribution, highly expressed in cochlea.

It is found in the secreted. The polypeptide is Otoraplin (OTOR) (Homo sapiens (Human)).